The following is a 365-amino-acid chain: Probable dual-specificity RNA methyltransferase RlmN (365 aa).

Glu108 serves as the catalytic Proton acceptor. In terms of domain architecture, Radical SAM core spans 114–352 (YPDRNTVCIS…SCTVRDTRGR (239 aa)). Cys121 and Cys358 are disulfide-bonded. Residues Cys128, Cys132, and Cys135 each contribute to the [4Fe-4S] cluster site. S-adenosyl-L-methionine-binding positions include 179–180 (GE), Ser213, 236–238 (SLH), and Asn315. Cys358 serves as the catalytic S-methylcysteine intermediate.

This sequence belongs to the radical SAM superfamily. RlmN family. [4Fe-4S] cluster serves as cofactor.

The protein resides in the cytoplasm. It carries out the reaction adenosine(2503) in 23S rRNA + 2 reduced [2Fe-2S]-[ferredoxin] + 2 S-adenosyl-L-methionine = 2-methyladenosine(2503) in 23S rRNA + 5'-deoxyadenosine + L-methionine + 2 oxidized [2Fe-2S]-[ferredoxin] + S-adenosyl-L-homocysteine. It catalyses the reaction adenosine(37) in tRNA + 2 reduced [2Fe-2S]-[ferredoxin] + 2 S-adenosyl-L-methionine = 2-methyladenosine(37) in tRNA + 5'-deoxyadenosine + L-methionine + 2 oxidized [2Fe-2S]-[ferredoxin] + S-adenosyl-L-homocysteine. In terms of biological role, specifically methylates position 2 of adenine 2503 in 23S rRNA and position 2 of adenine 37 in tRNAs. This Mycolicibacterium gilvum (strain PYR-GCK) (Mycobacterium gilvum (strain PYR-GCK)) protein is Probable dual-specificity RNA methyltransferase RlmN.